Here is a 115-residue protein sequence, read N- to C-terminus: Holo-[acyl-carrier-protein] synthase (115 aa).

2 residues coordinate Mg(2+): Asp5 and Glu51.

This sequence belongs to the P-Pant transferase superfamily. AcpS family. It depends on Mg(2+) as a cofactor.

Its subcellular location is the cytoplasm. The catalysed reaction is apo-[ACP] + CoA = holo-[ACP] + adenosine 3',5'-bisphosphate + H(+). Transfers the 4'-phosphopantetheine moiety from coenzyme A to a Ser of acyl-carrier-protein. The protein is Holo-[acyl-carrier-protein] synthase of Helicobacter acinonychis (strain Sheeba).